The following is a 390-amino-acid chain: GTP 3',8-cyclase, mitochondrial (390 aa).

Residues 1–45 constitute a mitochondrion transit peptide; it reads MRRCFSKITDCHLGFKNSNFLLVGSEVGSGSVTRTITTTTSERLF. Positions 69-290 constitute a Radical SAM core domain; that stretch reads KFGRLHTYLR…PSIKRMQDHP (222 aa). Arg-78 is a binding site for GTP. [4Fe-4S] cluster contacts are provided by Cys-85 and Cys-89. Tyr-91 lines the S-adenosyl-L-methionine pocket. Residue Cys-92 participates in [4Fe-4S] cluster binding. Arg-128 is a binding site for GTP. Gly-132 contributes to the S-adenosyl-L-methionine binding site. Thr-159 provides a ligand contact to GTP. S-adenosyl-L-methionine is bound at residue Ser-183. GTP is bound at residue Lys-220. Met-254 lines the S-adenosyl-L-methionine pocket. Residues Cys-317 and Cys-320 each contribute to the [4Fe-4S] cluster site. 322–324 lines the GTP pocket; sequence RLR. Cys-334 provides a ligand contact to [4Fe-4S] cluster.

It belongs to the radical SAM superfamily. MoaA family. Homodimer. [4Fe-4S] cluster serves as cofactor. In terms of tissue distribution, expressed in all organs, with an abundant expression in the roots.

It is found in the mitochondrion matrix. It carries out the reaction GTP + AH2 + S-adenosyl-L-methionine = (8S)-3',8-cyclo-7,8-dihydroguanosine 5'-triphosphate + 5'-deoxyadenosine + L-methionine + A + H(+). It participates in cofactor biosynthesis; molybdopterin biosynthesis. Functionally, catalyzes the cyclization of GTP to (8S)-3',8-cyclo-7,8-dihydroguanosine 5'-triphosphate. This chain is GTP 3',8-cyclase, mitochondrial (CNX2), found in Arabidopsis thaliana (Mouse-ear cress).